The sequence spans 322 residues: DNA repair and recombination protein RadA (322 aa).

An ATP-binding site is contributed by 105–112 (GMYGSGKT).

Belongs to the eukaryotic RecA-like protein family.

In terms of biological role, involved in DNA repair and in homologous recombination. Binds and assemble on single-stranded DNA to form a nucleoprotein filament. Hydrolyzes ATP in a ssDNA-dependent manner and promotes DNA strand exchange between homologous DNA molecules. The protein is DNA repair and recombination protein RadA of Methanococcus maripaludis (strain C6 / ATCC BAA-1332).